Here is a 458-residue protein sequence, read N- to C-terminus: Cysteine--tRNA ligase (458 aa).

C28 serves as a coordination point for Zn(2+). Residues 30–40 (VTVYDLCHFGH) carry the 'HIGH' region motif. Zn(2+) is bound by residues C209, H234, and E238. Residues 266–270 (KMSKS) carry the 'KMSKS' region motif. K269 is a binding site for ATP.

It belongs to the class-I aminoacyl-tRNA synthetase family. As to quaternary structure, monomer. Zn(2+) serves as cofactor.

The protein localises to the cytoplasm. The enzyme catalyses tRNA(Cys) + L-cysteine + ATP = L-cysteinyl-tRNA(Cys) + AMP + diphosphate. The polypeptide is Cysteine--tRNA ligase (Mannheimia succiniciproducens (strain KCTC 0769BP / MBEL55E)).